The following is a 336-amino-acid chain: Cytoplasmic envelopment protein 2 (336 aa).

This sequence belongs to the herpesviridae cytoplasmic envelopment protein 2 family. In terms of assembly, interacts with cytoplasmic envelopment protein 3 and with the capsid.

The protein localises to the virion tegument. The protein resides in the host cytoplasm. It is found in the host nucleus. Functionally, plays a critical role in cytoplasmic virus egress. Participates in the final step of tegumentation and envelope acquisition within the host cytoplasm by directly interacting with the capsid. Upon virion binding to target cell, a signaling cascade is triggered to disrupt the interaction with the capsid, thereby preparing capsid uncoating. The sequence is that of Cytoplasmic envelopment protein 2 from Elephantid herpesvirus 1 (isolate Asian elephant/Berlin/Kiba/1998) (EIHV-1).